The sequence spans 64 residues: DNA gyrase inhibitor YacG (64 aa).

Zn(2+) is bound by residues Cys7, Cys10, Cys26, and Cys30. The segment at 43-64 is disordered; that stretch reads KRIPGPINPDLLPYPDEGEQWQ.

This sequence belongs to the DNA gyrase inhibitor YacG family. Interacts with GyrB. Zn(2+) is required as a cofactor.

Functionally, inhibits all the catalytic activities of DNA gyrase by preventing its interaction with DNA. Acts by binding directly to the C-terminal domain of GyrB, which probably disrupts DNA binding by the gyrase. This is DNA gyrase inhibitor YacG from Aeromonas salmonicida (strain A449).